An 86-amino-acid polypeptide reads, in one-letter code: Anti-adapter protein IraP (86 aa).

Residues 1-36 adopt a coiled-coil conformation; the sequence is MKNLIAELLFKLAQKEEESKELCAQVEALEIIVTAM.

The protein belongs to the IraP family. In terms of assembly, interacts with RssB.

It is found in the cytoplasm. In terms of biological role, inhibits RpoS proteolysis by regulating RssB activity, thereby increasing the stability of the sigma stress factor RpoS especially during phosphate starvation, but also in stationary phase and during nitrogen starvation. Its effect on RpoS stability is due to its interaction with RssB, which probably blocks the interaction of RssB with RpoS, and the consequent delivery of the RssB-RpoS complex to the ClpXP protein degradation pathway. The sequence is that of Anti-adapter protein IraP from Shigella sonnei (strain Ss046).